Here is a 320-residue protein sequence, read N- to C-terminus: Cytochrome f (320 aa).

An N-terminal signal peptide occupies residues 1–35 (MQTRNTFSWIREEITRSISVSLMIYIITWASISSA). Heme is bound by residues tyrosine 36, cysteine 56, cysteine 59, and histidine 60. The helical transmembrane segment at 286-306 (VQGLLFFLGSVVLAQIFLVLK) threads the bilayer.

Belongs to the cytochrome f family. As to quaternary structure, the 4 large subunits of the cytochrome b6-f complex are cytochrome b6, subunit IV (17 kDa polypeptide, petD), cytochrome f and the Rieske protein, while the 4 small subunits are PetG, PetL, PetM and PetN. The complex functions as a dimer. Heme is required as a cofactor.

It localises to the plastid. Its subcellular location is the chloroplast thylakoid membrane. Functionally, component of the cytochrome b6-f complex, which mediates electron transfer between photosystem II (PSII) and photosystem I (PSI), cyclic electron flow around PSI, and state transitions. This chain is Cytochrome f, found in Nasturtium officinale (Watercress).